Consider the following 394-residue polypeptide: MSRTPGFSFSELARDGHARTGVLSTPHGDVLTPTFMPVGTQGSVKTLTPAEVAATGARIVLGNTYHLWLRPGPELVAQLGGLHAFTRWPHAMLTDSGGFQAFSLAERRTLVEDGFVFRSHLDGARKALTPEVAMEVQGLLGADIAMQLDVCPPGGAPRPEVEEACRLTTRWGKRCLAAKRPSQALFGIVQGGTSVALRMAHADELGALPFDGLALGGFSVGEPIAMMHEVVAQIGPHLDPTRPRYLMGVGTPIDLVHAIGAGVDMFDCVLPTRNARNGQALTQHGKIVIKQARYKEDRSPLDPTCACPTCTGGYSRAYLRHLYMAGEILVLRLLTEHNLHLYGRLMREARAAIAEGRYAAFARAWLGASDAGNANDANETVGATESTESTESTE.

The active-site Proton acceptor is the D95. Substrate-binding positions include 95-99 (DSGGF), D149, Q190, and G217. The tract at residues 248–254 (GVGTPID) is RNA binding. D267 acts as the Nucleophile in catalysis. The tract at residues 272–276 (TRNAR) is RNA binding; important for wobble base 34 recognition. Zn(2+) is bound by residues C305, C307, C310, and H337. A disordered region spans residues 375–394 (NDANETVGATESTESTESTE).

Belongs to the queuine tRNA-ribosyltransferase family. As to quaternary structure, homodimer. Within each dimer, one monomer is responsible for RNA recognition and catalysis, while the other monomer binds to the replacement base PreQ1. Zn(2+) is required as a cofactor.

The catalysed reaction is 7-aminomethyl-7-carbaguanine + guanosine(34) in tRNA = 7-aminomethyl-7-carbaguanosine(34) in tRNA + guanine. Its pathway is tRNA modification; tRNA-queuosine biosynthesis. Functionally, catalyzes the base-exchange of a guanine (G) residue with the queuine precursor 7-aminomethyl-7-deazaguanine (PreQ1) at position 34 (anticodon wobble position) in tRNAs with GU(N) anticodons (tRNA-Asp, -Asn, -His and -Tyr). Catalysis occurs through a double-displacement mechanism. The nucleophile active site attacks the C1' of nucleotide 34 to detach the guanine base from the RNA, forming a covalent enzyme-RNA intermediate. The proton acceptor active site deprotonates the incoming PreQ1, allowing a nucleophilic attack on the C1' of the ribose to form the product. After dissociation, two additional enzymatic reactions on the tRNA convert PreQ1 to queuine (Q), resulting in the hypermodified nucleoside queuosine (7-(((4,5-cis-dihydroxy-2-cyclopenten-1-yl)amino)methyl)-7-deazaguanosine). The sequence is that of Queuine tRNA-ribosyltransferase from Sorangium cellulosum (strain So ce56) (Polyangium cellulosum (strain So ce56)).